Reading from the N-terminus, the 250-residue chain is UPF0524 protein C3orf70 homolog (250 aa).

Residues 201–250 (ESCDEDTEEGAELSSEEDYSPESSWEPDECTLLSPSQSDLEVIETIETTV) form a disordered region. Positions 202–229 (SCDEDTEEGAELSSEEDYSPESSWEPDE) are enriched in acidic residues.

It belongs to the UPF0524 family.

In terms of biological role, may play a role in neuronal and neurobehavioral development. This is UPF0524 protein C3orf70 homolog from Bos taurus (Bovine).